A 150-amino-acid polypeptide reads, in one-letter code: Protein SprT-like (150 aa).

The 139-residue stretch at 11–149 (ELVDKLSLTY…CGKCRGSLKE (139 aa)) folds into the SprT-like domain. Residue H70 participates in Zn(2+) binding. The active site involves E71. H74 is a binding site for Zn(2+).

Belongs to the SprT family. The cofactor is Zn(2+).

The protein resides in the cytoplasm. This is Protein SprT-like from Oceanobacillus iheyensis (strain DSM 14371 / CIP 107618 / JCM 11309 / KCTC 3954 / HTE831).